A 458-amino-acid polypeptide reads, in one-letter code: ATP synthase subunit beta (458 aa).

An ATP-binding site is contributed by 148–155; sequence GGAGVGKT.

It belongs to the ATPase alpha/beta chains family. As to quaternary structure, F-type ATPases have 2 components, CF(1) - the catalytic core - and CF(0) - the membrane proton channel. CF(1) has five subunits: alpha(3), beta(3), gamma(1), delta(1), epsilon(1). CF(0) has three main subunits: a(1), b(2) and c(9-12). The alpha and beta chains form an alternating ring which encloses part of the gamma chain. CF(1) is attached to CF(0) by a central stalk formed by the gamma and epsilon chains, while a peripheral stalk is formed by the delta and b chains.

It is found in the cell inner membrane. It carries out the reaction ATP + H2O + 4 H(+)(in) = ADP + phosphate + 5 H(+)(out). Functionally, produces ATP from ADP in the presence of a proton gradient across the membrane. The catalytic sites are hosted primarily by the beta subunits. This is ATP synthase subunit beta from Halorhodospira halophila (strain DSM 244 / SL1) (Ectothiorhodospira halophila (strain DSM 244 / SL1)).